Reading from the N-terminus, the 241-residue chain is Zinc finger CCHC domain-containing protein 24 (241 aa).

Ser-65 and Ser-93 each carry phosphoserine. The CCHC-type zinc finger occupies 132–149; it reads YLCHLCFNKGHYIKDCPQ.

The protein is Zinc finger CCHC domain-containing protein 24 (ZCCHC24) of Macaca fascicularis (Crab-eating macaque).